Consider the following 438-residue polypeptide: Putative metabolite transport protein HI_0281 (438 aa).

Residues 1–17 (MSTQLRNNPMKVALASM) are Cytoplasmic-facing. Residues 18-38 (VGTAIEFFDYYIYAAAAVLVF) traverse the membrane as a helical segment. Topologically, residues 39 to 52 (NTQFFHSDDPLSND) are periplasmic. The helical transmembrane segment at 53–73 (LLSLSTLALAFFARPIGSALF) threads the bilayer. At 74-85 (GHFGDKIGRKKT) the chain is on the cytoplasmic side. Residues 86-106 (LVASLVLMGGSTVVIGLLPNY) form a helical membrane-spanning segment. At 107-115 (AQIGIWAPI) the chain is on the periplasmic side. Residues 116-136 (LLCVCRVGQGIGLGGEWGGAA) form a helical membrane-spanning segment. At 137–156 (LVATENAPEGKRAWYGTFPQ) the chain is on the cytoplasmic side. The helical transmembrane segment at 157–177 (LGAPIGLFVANGTFFLVSYLL) threads the bilayer. Residues 178–181 (GHNA) are Periplasmic-facing. A helical transmembrane segment spans residues 182–202 (LVEWAWRIPFVSSILLVAVGL). The Cytoplasmic portion of the chain corresponds to 203-239 (YVRLTLHESHVFVEAEQKGKKLNAPVSVVFTKHLKPM). A helical membrane pass occupies residues 240–260 (VIGTFIMVATYSLFYIMTAFA). Residues 261–286 (QAYSRTAPKLSEAGYALGLGIPANTF) are Periplasmic-facing. The chain crosses the membrane as a helical span at residues 287 to 307 (TGLLLISAIVFGIFISISGFY). At 308 to 314 (ADKIGRR) the chain is on the cytoplasmic side. The chain crosses the membrane as a helical span at residues 315-336 (KWLIWVTIAIGVLGLAMPLFLE). Residues 337–342 (NGTPVS) lie on the Periplasmic side of the membrane. The chain crosses the membrane as a helical span at residues 343-363 (VFAFLVIGMAIMGMTFGPMAA). At 364-377 (LLPELFPTEVRYSG) the chain is on the cytoplasmic side. A helical transmembrane segment spans residues 378–398 (ASLAYNLASIIGATIAAMISL). The Periplasmic segment spans residues 399 to 405 (KINASFG). A helical transmembrane segment spans residues 406 to 426 (VMGVGIYLAINALMTFLALLA). The Cytoplasmic portion of the chain corresponds to 427-438 (SKETKNVDLTEI).

It belongs to the major facilitator superfamily. Sugar transporter (TC 2.A.1.1) family.

It localises to the cell inner membrane. The chain is Putative metabolite transport protein HI_0281 from Haemophilus influenzae (strain ATCC 51907 / DSM 11121 / KW20 / Rd).